The following is a 59-amino-acid chain: MAFDKKLLDIVACPVCKGKLEYDKTTQQLICKADKLAYPITDGIPVLLENRAVPLNEAV.

The protein belongs to the UPF0434 family.

The sequence is that of UPF0434 protein Shewmr7_2490 from Shewanella sp. (strain MR-7).